Consider the following 133-residue polypeptide: MLGDAQQLELGRCAPADIALTVAATVVSRQDCRSGLRRIVLDCGSKILGSDRPAWATGFGRLIDHADARIAALSEHHATVVWPDDAPLPPVGTRLRVIPNHVCLTTNLVDDVAVVRDATLIDRWKVAARGKNH.

This is an uncharacterized protein from Mycobacterium tuberculosis (strain CDC 1551 / Oshkosh).